Consider the following 109-residue polypeptide: Large ribosomal subunit protein uL24 (109 aa).

It belongs to the universal ribosomal protein uL24 family. As to quaternary structure, part of the 50S ribosomal subunit.

One of two assembly initiator proteins, it binds directly to the 5'-end of the 23S rRNA, where it nucleates assembly of the 50S subunit. In terms of biological role, one of the proteins that surrounds the polypeptide exit tunnel on the outside of the subunit. The polypeptide is Large ribosomal subunit protein uL24 (Rickettsia rickettsii (strain Iowa)).